A 462-amino-acid polypeptide reads, in one-letter code: Chromosomal replication initiator protein DnaA (462 aa).

The interval 1 to 83 (MSLSLWQQCL…LRFEVGSKPA (83 aa)) is domain I, interacts with DnaA modulators. The tract at residues 83 to 125 (AARAHNNPVTASVSAPVAPVTRSAPMRPSWDNSPAQPELSYRS) is domain II. Residues 104-125 (RSAPMRPSWDNSPAQPELSYRS) form a disordered region. Positions 112–125 (WDNSPAQPELSYRS) are enriched in polar residues. Residues 126-342 (NVNPKHTFDN…GALNRVIANA (217 aa)) form a domain III, AAA+ region region. ATP is bound by residues Gly-170, Gly-172, Lys-173, and Thr-174. Residues 343–462 (NFTGRAITID…FSNLIRTLSS (120 aa)) are domain IV, binds dsDNA.

This sequence belongs to the DnaA family. As to quaternary structure, oligomerizes as a right-handed, spiral filament on DNA at oriC.

It localises to the cytoplasm. In terms of biological role, plays an essential role in the initiation and regulation of chromosomal replication. ATP-DnaA binds to the origin of replication (oriC) to initiate formation of the DNA replication initiation complex once per cell cycle. Binds the DnaA box (a 9 base pair repeat at the origin) and separates the double-stranded (ds)DNA. Forms a right-handed helical filament on oriC DNA; dsDNA binds to the exterior of the filament while single-stranded (ss)DNA is stabiized in the filament's interior. The ATP-DnaA-oriC complex binds and stabilizes one strand of the AT-rich DNA unwinding element (DUE), permitting loading of DNA polymerase. After initiation quickly degrades to an ADP-DnaA complex that is not apt for DNA replication. Binds acidic phospholipids. This Yersinia pseudotuberculosis serotype O:1b (strain IP 31758) protein is Chromosomal replication initiator protein DnaA.